The following is a 1580-amino-acid chain: Transcriptional activator GLI3 (1580 aa).

Methionine 1 carries the post-translational modification N-acetylmethionine. Composition is skewed to polar residues over residues 1-10 and 58-78; these read MEAQSHSSTT and ITMQ…PSTS. Residues 1-79 are disordered; the sequence is MEAQSHSSTT…KVSEEPSTSS (79 aa). Residue arginine 175 is modified to Omega-N-methylarginine. The segment at 368–475 is disordered; sequence QSLGSAFGHS…DKDESKQEPE (108 aa). Residues 401–427 are compositionally biased toward polar residues; the sequence is NPVQVSSGPSESSQNKPTSESAVSSTG. Residues lysine 438 and lysine 462 each participate in a glycyl lysine isopeptide (Lys-Gly) (interchain with G-Cter in SUMO2) cross-link. Over residues 461–474 the composition is skewed to basic and acidic residues; that stretch reads VKEEGDKDESKQEP. 5 C2H2-type zinc fingers span residues 480–505, 513–540, 546–570, 576–601, and 607–632; these read TNCH…NNDH, FVCR…MRRH, HKCT…LRSH, YVCE…NRTH, and YVCK…KTVH. A disordered region spans residues 620–728; the sequence is DPSSLRKHVK…PISNYSNSGL (109 aa). Over residues 632–648 the composition is skewed to basic and acidic residues; the sequence is HGPEAHVTKKQRGDIHP. Serine 664 carries the post-translational modification Phosphoserine. Over residues 684–699 the composition is skewed to basic and acidic residues; sequence SKREECLQVKTVKAEK. Residues 703 to 726 are compositionally biased toward low complexity; sequence SQPSPGGQSSCSSQQSPISNYSNS. A mediates interaction with DZIP1 region spans residues 745–845; the sequence is DETPIMDSTI…VDVTMLNMLN (101 aa). Lysine 773 participates in a covalent cross-link: Glycyl lysine isopeptide (Lys-Gly) (interchain with G-Cter in ubiquitin). A Glycyl lysine isopeptide (Lys-Gly) (interchain with G-Cter in SUMO2); alternate cross-link involves residue lysine 779. A Glycyl lysine isopeptide (Lys-Gly) (interchain with G-Cter in ubiquitin); alternate cross-link involves residue lysine 779. Glycyl lysine isopeptide (Lys-Gly) (interchain with G-Cter in ubiquitin) cross-links involve residues lysine 784 and lysine 800. Serine 849, serine 865, serine 877, and serine 907 each carry phosphoserine; by PKA. A compositionally biased stretch (low complexity) spans 863 to 882; sequence RSSGISPCFSSRRSSEASQA. The segment at 863–918 is disordered; the sequence is RSSGISPCFSSRRSSEASQAEGRPQNVSVADSYDPISTDASRRSSEASQSDGLPSL. The segment covering 908–918 has biased composition (polar residues); sequence EASQSDGLPSL. Residues serine 980 and serine 1006 each carry the phosphoserine; by PKA modification. The interval 981–1042 is disordered; that stretch reads DGGAHGYGRR…PAMATSAEKR (62 aa).

The protein belongs to the GLI C2H2-type zinc-finger protein family. The full-length GLI3 form (GLI3FL) interacts with SUFU and this interaction regulates the formation of either repressor or activator forms of GLI3. Its association with SUFU is regulated by Hh signaling and dissociation of the SUFU-GLI3 interaction requires the presence of the ciliary motor KIF3A. Interacts with KIF7. The activator form of GLI3 (GLI3A) but not the repressor form (GLI3R) can interact with TRPS1. The phosphorylated form interacts with BTRC. Interacts with ZIC1. Interacts with ZIC3 (via C2H2-type domains 3, 4 and 5); the interaction enhances its transcriptional activity. Interacts with WRD11; the interaction associates EMX1 with GLI3. Interacts with DZIP1; retains GLI3 within the cytoplasm. Phosphorylated on multiple sites by protein kinase A (PKA) and phosphorylation by PKA primes further phosphorylation by CK1 and GSK3. Phosphorylated by DYRK2 (in vitro). Phosphorylation is essential for its proteolytic processing. In terms of processing, transcriptional repressor GLI3R, a C-terminally truncated form, is generated from the full-length GLI3 protein (GLI3FL/GLI3-190) through proteolytic processing. This process requires PKA-primed phosphorylation of GLI3, ubiquitination of GLI3 and the presence of BTRC. GLI3FL is complexed with SUFU in the cytoplasm and is maintained in a neutral state. Without the Hh signal, the SUFU-GLI3 complex is recruited to cilia, leading to the efficient processing of GLI3FL into GLI3R. GLI3R formation leads to its dissociation from SUFU, allowing it to translocate into the nucleus, and repress Hh target genes. When Hh signaling is initiated, SUFU dissociates from GLI3FL and this has two consequences. First, GLI3R production is halted. Second, free GLI3FL translocates to the nucleus, where it is phosphorylated, destabilized, and converted to a transcriptional activator (GLI3A). Phosphorylated in vitro by ULK3.

The protein localises to the nucleus. It is found in the cytoplasm. The protein resides in the cell projection. Its subcellular location is the cilium. Its function is as follows. Has a dual function as a transcriptional activator and a repressor of the sonic hedgehog (Shh) pathway, and plays a role in limb development. The full-length GLI3 form (GLI3FL) after phosphorylation and nuclear translocation, acts as an activator (GLI3A) while GLI3R, its C-terminally truncated form, acts as a repressor. A proper balance between the GLI3 activator and the repressor GLI3R, rather than the repressor gradient itself or the activator/repressor ratio gradient, specifies limb digit number and identity. In concert with TRPS1, plays a role in regulating the size of the zone of distal chondrocytes, in restricting the zone of PTHLH expression in distal cells and in activating chondrocyte proliferation. Binds to the minimal GLI-consensus sequence 5'-GGGTGGTC-3'. Plays a role in limb and brain development. The chain is Transcriptional activator GLI3 (GLI3) from Pan troglodytes (Chimpanzee).